Consider the following 178-residue polypeptide: MKHTVEVMIPEAEIKARIAELGRQITERYKDSGSDMVLVGLLRGSFMFMADLCREVQVSHEVDFMTASSYGSGMSTTRDVKILKDLDEDIRGKDVLIVEDIIDSGNTLSKVREILSLREPKSLAICTLLDKPSRREVNVPVEFIGFSIPDEFVVGYGIDYAQRYRHLPYIGKVILLDE.

Residues arginine 43 and glycine 44 each contribute to the diphosphate site. Residue glutamate 99 participates in GMP binding. Position 99 (glutamate 99) interacts with IMP. The Mg(2+) site is built by glutamate 99 and aspartate 100. Catalysis depends on aspartate 103, which acts as the Proton acceptor. GMP is bound by residues 103 to 108 (DSGNTL), lysine 131, and aspartate 159. Residues 103 to 108 (DSGNTL) and lysine 131 each bind IMP. Arginine 165 contributes to the diphosphate binding site.

Belongs to the purine/pyrimidine phosphoribosyltransferase family. In terms of assembly, homotetramer. The cofactor is Mg(2+).

It localises to the cytoplasm. The catalysed reaction is IMP + diphosphate = hypoxanthine + 5-phospho-alpha-D-ribose 1-diphosphate. It catalyses the reaction GMP + diphosphate = guanine + 5-phospho-alpha-D-ribose 1-diphosphate. It functions in the pathway purine metabolism; IMP biosynthesis via salvage pathway; IMP from hypoxanthine: step 1/1. Functionally, purine salvage pathway enzyme which catalyzes the transfer of the ribosyl-5-phosphate group from 5-phospho-alpha-D-ribose 1-diphosphate (PRPP) to the N9 position of hypoxanthine to yield IMP (inosine 5'-monophosphate). To a lesser extent, can also act on guanine leading to GMP, but shows a highly less efficient activity with xanthine. The polypeptide is Hypoxanthine phosphoribosyltransferase (hpt) (Shigella flexneri).